We begin with the raw amino-acid sequence, 213 residues long: Imidazole glycerol phosphate synthase subunit HisH (213 aa).

The 211-residue stretch at 3–213 folds into the Glutamine amidotransferase type-1 domain; sequence MIGVIDYGMG…VGIVTGRENG (211 aa). Cys81 functions as the Nucleophile in the catalytic mechanism. Residues His188 and Glu190 contribute to the active site.

As to quaternary structure, heterodimer of HisH and HisF.

The protein localises to the cytoplasm. It carries out the reaction 5-[(5-phospho-1-deoxy-D-ribulos-1-ylimino)methylamino]-1-(5-phospho-beta-D-ribosyl)imidazole-4-carboxamide + L-glutamine = D-erythro-1-(imidazol-4-yl)glycerol 3-phosphate + 5-amino-1-(5-phospho-beta-D-ribosyl)imidazole-4-carboxamide + L-glutamate + H(+). It catalyses the reaction L-glutamine + H2O = L-glutamate + NH4(+). It participates in amino-acid biosynthesis; L-histidine biosynthesis; L-histidine from 5-phospho-alpha-D-ribose 1-diphosphate: step 5/9. Functionally, IGPS catalyzes the conversion of PRFAR and glutamine to IGP, AICAR and glutamate. The HisH subunit catalyzes the hydrolysis of glutamine to glutamate and ammonia as part of the synthesis of IGP and AICAR. The resulting ammonia molecule is channeled to the active site of HisF. This Geobacillus thermodenitrificans (strain NG80-2) protein is Imidazole glycerol phosphate synthase subunit HisH.